A 290-amino-acid chain; its full sequence is Glyceraldehyde-3-phosphate dehydrogenase (290 aa).

Residues aspartate 13 and arginine 58 each contribute to the NAD(+) site. D-glyceraldehyde 3-phosphate is bound by residues 129-131 (SCT), threonine 160, 189-190 (TG), and arginine 212. The active-site Nucleophile is the cysteine 130.

The protein belongs to the glyceraldehyde-3-phosphate dehydrogenase family. As to quaternary structure, homotetramer.

Its subcellular location is the cytoplasm. It catalyses the reaction D-glyceraldehyde 3-phosphate + phosphate + NAD(+) = (2R)-3-phospho-glyceroyl phosphate + NADH + H(+). The protein operates within carbohydrate degradation; glycolysis; pyruvate from D-glyceraldehyde 3-phosphate: step 1/5. The polypeptide is Glyceraldehyde-3-phosphate dehydrogenase (GPD) (Lactarius deterrimus (False saffron milkcap)).